Consider the following 1124-residue polypeptide: ATP-dependent DNA helicase mph1 (1124 aa).

Disordered stretches follow at residues 1-103 and 123-302; these read MFTL…EARS and QLTQ…PTQH. Composition is skewed to acidic residues over residues 7-17 and 169-178; these read DSSDYFDDDLG and RDDEYDDDEE. Positions 210-222 are enriched in polar residues; it reads TPIIGQQSTTIEA. A compositionally biased stretch (acidic residues) spans 226 to 236; it reads LLDDIPDDAFD. A compositionally biased stretch (polar residues) spans 255–271; that stretch reads SFTQSTNRPLGVRQTTL. In terms of domain architecture, Helicase ATP-binding spans 328–496; sequence IAQKGLFHNL…AVIDGLDISR (169 aa). ATP is bound at residue 341 to 348; that stretch reads LPTGLGKT. The DEAH box signature appears at 444–447; sequence DEAH. One can recognise a Helicase C-terminal domain in the interval 666-840; sequence YLKQVVLNHF…GTRFTFHDDM (175 aa). The segment covering 855-873 has biased composition (basic and acidic residues); it reads KRAIDIPEENTVRDLPEPK. Disordered stretches follow at residues 855 to 923 and 1016 to 1124; these read KRAI…TPEP and MPKA…DSDD. Composition is skewed to basic residues over residues 874 to 886 and 906 to 916; these read RRGR…PKKF and SKRRVPNKSKA.

This sequence belongs to the DEAD box helicase family. DEAH subfamily. FANCM sub-subfamily. In terms of assembly, interacts with the MHF histone-fold complex to form the FANCM-MHF complex.

The protein resides in the nucleus. It carries out the reaction ATP + H2O = ADP + phosphate + H(+). In terms of biological role, ATP-dependent DNA helicase involved in DNA damage repair by homologous recombination and in genome maintenance. Capable of unwinding D-loops. Plays a role in limiting crossover recombinants during mitotic DNA double-strand break (DSB) repair. Component of a FANCM-MHF complex which promotes gene conversion at blocked replication forks, probably by reversal of the stalled fork. This is ATP-dependent DNA helicase mph1 from Aspergillus niger (strain ATCC MYA-4892 / CBS 513.88 / FGSC A1513).